We begin with the raw amino-acid sequence, 91 residues long: Secretoglobin family 3A member 2 (91 aa).

The signal sequence occupies residues 1–21 (MKLVSIFLLVTIGICGYSATA).

The protein belongs to the secretoglobin family. UGRP subfamily. Homodimer; disulfide-linked. Monomer. Interacts with APOA1. In terms of tissue distribution, highly expressed in lung where it localizes to epithelial cells of the trachea, bronchus and bronchioles (at protein level). Expressed in club cells of the bronchioles. Also detected in the anterior and posterior lobes of the pituitary gland where it may localize to gonadotropic cells (at protein level). Not detected in other tissues tested.

The protein localises to the secreted. Secreted cytokine-like protein. Binds to the scavenger receptor MARCO. Can also bind to pathogens including the Gram-positive bacterium L.monocytogenes, the Gram-negative bacterium P.aeruginosa, and yeast. Strongly inhibits phospholipase A2 (PLA2G1B) activity. Seems to have anti-inflammatory effects in respiratory epithelium. Also has anti-fibrotic activity in lung. May play a role in fetal lung development and maturation. Promotes branching morphogenesis during early stages of lung development. In the pituitary, may inhibit production of follicle-stimulating hormone (FSH) and luteinizing hormone (LH). This chain is Secretoglobin family 3A member 2 (Scgb3a2), found in Mus musculus (Mouse).